Here is a 200-residue protein sequence, read N- to C-terminus: Large ribosomal subunit protein bL25 (200 aa).

Belongs to the bacterial ribosomal protein bL25 family. CTC subfamily. As to quaternary structure, part of the 50S ribosomal subunit; part of the 5S rRNA/L5/L18/L25 subcomplex. Contacts the 5S rRNA. Binds to the 5S rRNA independently of L5 and L18.

Its function is as follows. This is one of the proteins that binds to the 5S RNA in the ribosome where it forms part of the central protuberance. The chain is Large ribosomal subunit protein bL25 from Pseudomonas fluorescens (strain Pf0-1).